Here is a 346-residue protein sequence, read N- to C-terminus: UDP-N-acetylenolpyruvoylglucosamine reductase (346 aa).

Residues 18–189 (LRAQARAFIA…VSVVFALKTH (172 aa)) enclose the FAD-binding PCMH-type domain. The active site involves Arg-165. The active-site Proton donor is Ser-240. The active site involves Glu-336.

This sequence belongs to the MurB family. FAD is required as a cofactor.

It is found in the cytoplasm. It catalyses the reaction UDP-N-acetyl-alpha-D-muramate + NADP(+) = UDP-N-acetyl-3-O-(1-carboxyvinyl)-alpha-D-glucosamine + NADPH + H(+). The protein operates within cell wall biogenesis; peptidoglycan biosynthesis. In terms of biological role, cell wall formation. This is UDP-N-acetylenolpyruvoylglucosamine reductase from Neisseria meningitidis serogroup A / serotype 4A (strain DSM 15465 / Z2491).